Consider the following 128-residue polypeptide: 3-aminoacrylate deaminase RutC (128 aa).

It belongs to the RutC family. Homotrimer.

The catalysed reaction is (Z)-3-aminoacrylate + H2O + H(+) = 3-oxopropanoate + NH4(+). Its function is as follows. Involved in pyrimidine catabolism. Catalyzes the deamination of 3-aminoacrylate to malonic semialdehyde, a reaction that can also occur spontaneously. RutC may facilitate the reaction and modulate the metabolic fitness, rather than catalyzing essential functions. The sequence is that of 3-aminoacrylate deaminase RutC from Escherichia coli O103:H2 (strain 12009 / EHEC).